The sequence spans 104 residues: Complex III assembly factor LYRM7 (104 aa).

Serine 60 carries the phosphoserine modification.

It belongs to the complex I LYR family. Interacts with UQCRFS1.

The protein resides in the mitochondrion matrix. In terms of biological role, assembly factor required for Rieske Fe-S protein UQCRFS1 incorporation into the cytochrome b-c1 (CIII) complex. Functions as a chaperone, binding to this subunit within the mitochondrial matrix and stabilizing it prior to its translocation and insertion into the late CIII dimeric intermediate within the mitochondrial inner membrane. This Bos taurus (Bovine) protein is Complex III assembly factor LYRM7 (LYRM7).